The primary structure comprises 267 residues: Methylglyoxal reductase DkgB (267 aa).

The active-site Proton donor is Y39. H97 lines the substrate pocket. 179-231 (MTLAYGKALAEPVIKTIAEQHGATPAQVILSWAMQLGYGVIPSSTKAANLASN) is an NADP(+) binding site.

This sequence belongs to the aldo/keto reductase family. Monomer.

It localises to the cytoplasm. It catalyses the reaction hydroxyacetone + NADP(+) = methylglyoxal + NADPH + H(+). Functionally, aldo-keto reductase that significantly contributes to cellular methylglyoxal detoxification by catalyzing the NADPH-dependent conversion of methylglyoxal to acetol. This is Methylglyoxal reductase DkgB from Yersinia pestis.